Reading from the N-terminus, the 55-residue chain is Conotoxin Cal6.40 (55 aa).

The first 21 residues, 1 to 21, serve as a signal peptide directing secretion; the sequence is MSGSGVLLLTLLLLVPLSALA. Disulfide bonds link C24-C36, C29-C41, and C35-C50.

As to expression, expressed by the venom duct.

It is found in the secreted. In terms of biological role, probable neurotoxin. The polypeptide is Conotoxin Cal6.40 (Californiconus californicus (California cone)).